The chain runs to 960 residues: Dynamin-like GTPase OPA1, mitochondrial (960 aa).

The transit peptide at 1–87 directs the protein to the mitochondrion; it reads MWRAGRAAVA…IKYGYQPRRN (87 aa). Residues 88-96 are Mitochondrial matrix-facing; the sequence is FWPARLAAR. A helical transmembrane segment spans residues 97-113; that stretch reads LLKLRYIILGSAVGGGY. Over 114 to 770 the chain is Mitochondrial intermembrane; it reads TAKKTFDEWK…NAIENMIGPD (657 aa). A coiled-coil region spans residues 210–254; sequence SDKEKIDQLQEELLHTQLKYQRILERLEKENKELRKLVLQKDDKG. The short motif at 217–222 is the LQQQIQ motif element; it reads QLQEEL. N6-acetyllysine is present on Lys-228. Residues 285–561 form the Dynamin-type G domain; sequence QDHLPRVVVV…FWKMVRESVE (277 aa). The segment at 295-302 is G1 motif; sequence GDQSAGKT. 6 residues coordinate GTP: Ser-298, Gly-300, Lys-301, Thr-302, Ser-303, and Gly-317. Thr-302 serves as a coordination point for Mg(2+). The interval 321-324 is G2 motif; it reads MMTR. Thr-323 and Asp-398 together coordinate Mg(2+). Positions 398–401 are G3 motif; it reads DLPG. Residues 467–470 are G4 motif; the sequence is TKVD. GTP contacts are provided by Lys-468, Asp-470, and Thr-503. Residues 501–504 form a G5 motif region; it reads VVTG. Stalk region stretches follow at residues 589 to 836 and 874 to 928; these read DRNE…IKDT and CNDV…VKLL. Positions 736 to 856 are paddle region; it reads SDKQQWDAAI…KTALNHCNLC (121 aa). Residues 771 to 781 lie within the membrane without spanning it; it reads WKKRWMYWKNR. At 782-960 the chain is on the mitochondrial intermembrane side; sequence TQEQCVHNET…AFIEALHQEK (179 aa). Cys-856 and Cys-874 are disulfide-bonded. Residues 895–960 adopt a coiled-coil conformation; the sequence is RQQLTNTEVR…AFIEALHQEK (66 aa).

This sequence belongs to the TRAFAC class dynamin-like GTPase superfamily. Dynamin/Fzo/YdjA family. In terms of assembly, oligomeric complex consisting of membrane-bound and soluble forms of OPA1. Interacts with RCC1L; RCC1L acts as a guanine nucleotide exchange factor (GEF) for OPA1 by exchanging bound GDP for free GTP. Interacts with CHCHD3 and IMMT; these interactions occur preferentially with soluble OPA1 forms. Interacts with PRELID1. Post-translationally, cleaved by OMA1 or YME1L downstream of the transmembrane region in response to different signals to generate soluble forms. Cleaved by OMA1 at position S1 following stress conditions, generating the short soluble form (Dynamin-like GTPase OPA1, short form; S-OPA1). AFG3L2 is involved in the regulation of OMA1-dependent processing of OPA1. PARL-dependent proteolytic processing releases an antiapoptotic soluble form not required for mitochondrial fusion. In terms of processing, cleavage at position S2 by YME1L is required to mediate oxidative phosphorylation (OXPHOS)-induced mitochondrial fusion. Cleavage occurs in the sequence motif Leu-Gln-Gln-Gln-Ile-Gln (LQQQIQ). Cleavage at position S3 by YME1L is required for membrane tubulation. In terms of tissue distribution, detected in brain (at protein level). Detected in brain, brain stem, heart, kidney, liver and skeletal muscle.

It is found in the mitochondrion inner membrane. The protein localises to the mitochondrion intermembrane space. The enzyme catalyses GTP + H2O = GDP + phosphate + H(+). Its activity is regulated as follows. Activated by guanine nucleotide exchange factor RCC1L. Functionally, dynamin-related GTPase that is essential for normal mitochondrial morphology by mediating fusion of the mitochondrial inner membranes, regulating cristae morphology and maintaining respiratory chain function. Exists in two forms: the transmembrane, long form (Dynamin-like GTPase OPA1, long form; L-OPA1), which is tethered to the inner mitochondrial membrane, and the short soluble form (Dynamin-like GTPase OPA1, short form; S-OPA1), which results from proteolytic cleavage and localizes in the intermembrane space. Both forms (L-OPA1 and S-OPA1) cooperate to catalyze the fusion of the mitochondrial inner membrane. The equilibrium between L-OPA1 and S-OPA1 is essential: excess levels of S-OPA1, produced by cleavage by OMA1 following loss of mitochondrial membrane potential, lead to an impaired equilibrium between L-OPA1 and S-OPA1, inhibiting mitochondrial fusion. The balance between L-OPA1 and S-OPA1 also influences cristae shape and morphology. Involved in remodeling cristae and the release of cytochrome c during apoptosis. Proteolytic processing by PARL in response to intrinsic apoptotic signals may lead to disassembly of OPA1 oligomers and release of the caspase activator cytochrome C (CYCS) into the mitochondrial intermembrane space. Acts as a regulator of T-helper Th17 cells, which are characterized by cells with fused mitochondria with tight cristae, by mediating mitochondrial membrane remodeling: OPA1 is required for interleukin-17 (IL-17) production. Its role in mitochondrial morphology is required for mitochondrial genome maintenance. Its function is as follows. Constitutes the transmembrane long form (L-OPA1) that plays a central role in mitochondrial inner membrane fusion and cristae morphology. L-OPA1 and the soluble short form (S-OPA1) form higher-order helical assemblies that coordinate the fusion of mitochondrial inner membranes. Inner membrane-anchored L-OPA1 molecules initiate membrane remodeling by recruiting soluble S-OPA1 to rapidly polymerize into a flexible cylindrical scaffold encaging the mitochondrial inner membrane. Once at the membrane surface, the formation of S-OPA1 helices induce bilayer curvature. OPA1 dimerization through the paddle region, which inserts into cardiolipin-containing membrane, promotes GTP hydrolysis and the helical assembly of a flexible OPA1 lattice on the membrane, which drives membrane curvature and mitochondrial fusion. Plays a role in the maintenance and remodeling of mitochondrial cristae, some invaginations of the mitochondrial inner membrane that provide an increase in the surface area. Probably acts by forming helical filaments at the inside of inner membrane tubes with the shape and dimensions of crista junctions. The equilibrium between L-OPA1 and S-OPA1 influences cristae shape and morphology: increased L-OPA1 levels promote cristae stacking and elongated mitochondria, while increased S-OPA1 levels correlated with irregular cristae packing and round mitochondria shape. In terms of biological role, constitutes the soluble short form (S-OPA1) generated by cleavage by OMA1, which plays a central role in mitochondrial inner membrane fusion and cristae morphology. The transmembrane long form (L-OPA1) and the S-OPA1 form higher-order helical assemblies that coordinate the fusion of mitochondrial inner membranes. Inner membrane-anchored L-OPA1 molecules initiate membrane remodeling by recruiting soluble S-OPA1 to rapidly polymerize into a flexible cylindrical scaffold encaging the mitochondrial inner membrane. Once at the membrane surface, the formation of S-OPA1 helices induce bilayer curvature. OPA1 dimerization through the paddle region, which inserts into cardiolipin-containing membrane, promotes GTP hydrolysis and the helical assembly of a flexible OPA1 lattice on the membrane, which drives membrane curvature and mitochondrial fusion. Excess levels of S-OPA1 produced by cleavage by OMA1 following stress conditions that induce loss of mitochondrial membrane potential, lead to an impaired equilibrium between L-OPA1 and S-OPA1, thereby inhibiting mitochondrial fusion. Involved in mitochondrial safeguard in response to transient mitochondrial membrane depolarization by mediating flickering: cleavage by OMA1 leads to excess production of S-OPA1, preventing mitochondrial hyperfusion. Plays a role in the maintenance and remodeling of mitochondrial cristae, some invaginations of the mitochondrial inner membrane that provide an increase in the surface area. Probably acts by forming helical filaments at the inside of inner membrane tubes with the shape and dimensions of crista junctions. The equilibrium between L-OPA1 and S-OPA1 influences cristae shape and morphology: increased L-OPA1 levels promote cristae stacking and elongated mitochondria, while increased S-OPA1 levels correlated with irregular cristae packing and round mitochondria shape. Isoforms that contain the alternative exon 4b are required for mitochondrial genome maintenance, possibly by anchoring the mitochondrial nucleoids to the inner mitochondrial membrane. The polypeptide is Dynamin-like GTPase OPA1, mitochondrial (Mus musculus (Mouse)).